The primary structure comprises 316 residues: Olfactory receptor 12D3 (316 aa).

Residues 1-23 are Extracellular-facing; the sequence is MENVTTMNEFLLLGLTGVQELQP. N3 is a glycosylation site (N-linked (GlcNAc...) asparagine). Residues 24–44 form a helical membrane-spanning segment; sequence FFFGIFLIIYLINLIGNGSIL. Residues 45–52 lie on the Cytoplasmic side of the membrane; that stretch reads VMVVLEPQ. The chain crosses the membrane as a helical span at residues 53-73; it reads LHSPMYFFLGNLSCLDISYSS. The Extracellular segment spans residues 74-97; the sequence is VTLPKLLVNLVCSRRAISFLGCIT. An intrachain disulfide couples C95 to C187. Residues 98-118 form a helical membrane-spanning segment; sequence QLHFFHFLGSTEAILLAIMAF. Residues 119–137 lie on the Cytoplasmic side of the membrane; that stretch reads DRFVAICNPLRYTVIMNPQ. A helical membrane pass occupies residues 138-158; that stretch reads VCILLAAAAWLISFFYALMHS. Over 159-195 the chain is Extracellular; the sequence is VMTAHLSFCGSQKLNHFFYDVKPLLELACSDTLLNQW. Residues 196-215 traverse the membrane as a helical segment; that stretch reads LLSIVTGSISMGAFFLTLLS. The Cytoplasmic portion of the chain corresponds to 216 to 236; it reads CFYVIGFLLFKNRSCRILHKA. Residues 237-257 form a helical membrane-spanning segment; that stretch reads LSTCASHFMVVCLFYGPVGFT. At 258–270 the chain is on the extracellular side; sequence YIRPASATSMIQD. Residues 271–291 traverse the membrane as a helical segment; it reads RIMAIMYSAVTPVLNPLIYTL. Residues 292–316 are Cytoplasmic-facing; sequence RNKEVMMALKKIFGRKLFKDWQQHH.

The protein belongs to the G-protein coupled receptor 1 family.

It is found in the cell membrane. Functionally, odorant receptor. The protein is Olfactory receptor 12D3 (OR12D3) of Homo sapiens (Human).